The chain runs to 334 residues: Ornithine carbamoyltransferase (334 aa).

Carbamoyl phosphate-binding positions include 56–59, Gln-83, Arg-107, and 134–137; these read STRT and HPTQ. Residues Asn-168, Asp-232, and 236-237 each bind L-ornithine; that span reads SM. Carbamoyl phosphate-binding positions include 274 to 275 and Arg-320; that span reads CL.

This sequence belongs to the aspartate/ornithine carbamoyltransferase superfamily. OTCase family. In terms of assembly, homotrimer.

Its subcellular location is the cytoplasm. It carries out the reaction carbamoyl phosphate + L-ornithine = L-citrulline + phosphate + H(+). It functions in the pathway amino-acid biosynthesis; L-arginine biosynthesis; L-arginine from L-ornithine and carbamoyl phosphate: step 1/3. Its function is as follows. Reversibly catalyzes the transfer of the carbamoyl group from carbamoyl phosphate (CP) to the N(epsilon) atom of ornithine (ORN) to produce L-citrulline. This is Ornithine carbamoyltransferase (argI) from Salmonella typhimurium (strain LT2 / SGSC1412 / ATCC 700720).